Consider the following 344-residue polypeptide: tRNA N6-adenosine threonylcarbamoyltransferase (344 aa).

Fe cation contacts are provided by histidine 112 and histidine 116. Substrate is bound by residues 135-139, aspartate 168, glycine 181, and asparagine 271; that span reads LVSGG. Aspartate 299 is a Fe cation binding site.

This sequence belongs to the KAE1 / TsaD family. Fe(2+) is required as a cofactor.

It is found in the cytoplasm. The catalysed reaction is L-threonylcarbamoyladenylate + adenosine(37) in tRNA = N(6)-L-threonylcarbamoyladenosine(37) in tRNA + AMP + H(+). Required for the formation of a threonylcarbamoyl group on adenosine at position 37 (t(6)A37) in tRNAs that read codons beginning with adenine. Is involved in the transfer of the threonylcarbamoyl moiety of threonylcarbamoyl-AMP (TC-AMP) to the N6 group of A37, together with TsaE and TsaB. TsaD likely plays a direct catalytic role in this reaction. The protein is tRNA N6-adenosine threonylcarbamoyltransferase of Sphingopyxis alaskensis (strain DSM 13593 / LMG 18877 / RB2256) (Sphingomonas alaskensis).